We begin with the raw amino-acid sequence, 154 residues long: Myoglobin (154 aa).

The 147-residue stretch at 2–148 (GLSDGEWQLV…FRNDMAAQYK (147 aa)) folds into the Globin domain. Residue S4 is modified to Phosphoserine. Position 65 (H65) interacts with nitrite. H65 serves as a coordination point for O2. Phosphothreonine is present on T68. H94 contributes to the heme b binding site.

As to quaternary structure, monomer.

It is found in the cytoplasm. Its subcellular location is the sarcoplasm. The enzyme catalyses Fe(III)-heme b-[protein] + nitric oxide + H2O = Fe(II)-heme b-[protein] + nitrite + 2 H(+). It catalyses the reaction H2O2 + AH2 = A + 2 H2O. Its function is as follows. Monomeric heme protein which primary function is to store oxygen and facilitate its diffusion within muscle tissues. Reversibly binds oxygen through a pentacoordinated heme iron and enables its timely and efficient release as needed during periods of heightened demand. Depending on the oxidative conditions of tissues and cells, and in addition to its ability to bind oxygen, it also has a nitrite reductase activity whereby it regulates the production of bioactive nitric oxide. Under stress conditions, like hypoxia and anoxia, it also protects cells against reactive oxygen species thanks to its pseudoperoxidase activity. This Rangifer tarandus (Reindeer) protein is Myoglobin.